Here is a 129-residue protein sequence, read N- to C-terminus: Large ribosomal subunit protein bL17 (129 aa).

The protein belongs to the bacterial ribosomal protein bL17 family. In terms of assembly, part of the 50S ribosomal subunit. Contacts protein L32.

In Pasteurella multocida (strain Pm70), this protein is Large ribosomal subunit protein bL17.